The following is a 125-amino-acid chain: Calcitonin receptor-stimulating peptide 1 (125 aa).

An N-terminal signal peptide occupies residues 1–25; sequence MGFWKFPPFLVLSILVLYQAGMFHA. Residues 26–77 constitute a propeptide that is removed on maturation; that stretch reads APFRSVFDGRFDPATLDEEESRLLLAAMVNDYEQMRTRESEKAQKTEGSRIQ. C81 and C86 form a disulfide bridge.

Belongs to the calcitonin family.

The protein resides in the secreted. Its function is as follows. Stimulates cAMP production via the calcitonin receptor (CT) but not via the CT-like (CL) receptor. This chain is Calcitonin receptor-stimulating peptide 1 (CRSP1), found in Ovis aries (Sheep).